We begin with the raw amino-acid sequence, 289 residues long: Ribosome-inactivating protein alpha-trichosanthin (289 aa).

Residues 1 to 23 (MIRFLVLSLLILTLFLTTPAVEG) form the signal peptide. The active site involves E183. A propeptide spans 271–289 (AMDDDVPMTQSFGCGSYAI) (removed in mature form).

Belongs to the ribosome-inactivating protein family. Type 1 RIP subfamily.

It catalyses the reaction Endohydrolysis of the N-glycosidic bond at one specific adenosine on the 28S rRNA.. Inactivates eukaryotic 60S ribosomal subunits. The polypeptide is Ribosome-inactivating protein alpha-trichosanthin (Trichosanthes kirilowii (Chinese snake gourd)).